The following is a 213-amino-acid chain: Ras-related protein Rab-19 (213 aa).

S24, V26, G27, K28, T29, C30, D42, and T47 together coordinate GTP. Residue T29 coordinates Mg(2+). The Switch 1 signature appears at 37-52 (SGIFMDNQQNTIGVDF). Residues T47 and D70 each coordinate Mg(2+). The Switch 2 signature appears at 72–87 (AGQERFRTITQSYYRS). Residues G73, N128, K129, D131, S159, A160, and K161 each contribute to the GTP site. 2 S-geranylgeranyl cysteine lipidation sites follow: C211 and C213. C213 is subject to Cysteine methyl ester.

The protein belongs to the small GTPase superfamily. Rab family. Mg(2+) serves as cofactor.

It is found in the cell membrane. It carries out the reaction GTP + H2O = GDP + phosphate + H(+). Its activity is regulated as follows. Regulated by guanine nucleotide exchange factors (GEFs) which promote the exchange of bound GDP for free GTP. Regulated by GTPase activating proteins (GAPs) which increase the GTP hydrolysis activity. Inhibited by GDP dissociation inhibitors (GDIs). Functionally, the small GTPases Rab are key regulators of intracellular membrane trafficking, from the formation of transport vesicles to their fusion with membranes. Rabs cycle between an inactive GDP-bound form and an active GTP-bound form that is able to recruit to membranes different set of downstream effectors directly responsible for vesicle formation, movement, tethering and fusion. The polypeptide is Ras-related protein Rab-19 (rab19) (Xenopus laevis (African clawed frog)).